We begin with the raw amino-acid sequence, 943 residues long: Leucine--tRNA ligase (943 aa).

The 'HIGH' region motif lies at 40-51 (PYPSGAGLHVGH). Positions 717–721 (KMSKS) match the 'KMSKS' region motif. Residue lysine 720 coordinates ATP.

It belongs to the class-I aminoacyl-tRNA synthetase family.

It localises to the cytoplasm. The enzyme catalyses tRNA(Leu) + L-leucine + ATP = L-leucyl-tRNA(Leu) + AMP + diphosphate. The protein is Leucine--tRNA ligase of Bacteroides fragilis (strain ATCC 25285 / DSM 2151 / CCUG 4856 / JCM 11019 / LMG 10263 / NCTC 9343 / Onslow / VPI 2553 / EN-2).